Here is a 256-residue protein sequence, read N- to C-terminus: 3-hydroxy-5-phosphonooxypentane-2,4-dione thiolase (256 aa).

K168 acts as the Schiff-base intermediate with substrate in catalysis.

Belongs to the DeoC/FbaB aldolase family. In terms of assembly, homodecamer.

The protein localises to the cytoplasm. It carries out the reaction dihydroxyacetone phosphate + acetyl-CoA = 3-hydroxy-2,4-dioxopentyl phosphate + CoA. Functionally, involved in the degradation of phospho-AI-2, thereby terminating induction of the lsr operon and closing the AI-2 signaling cycle. Catalyzes the transfer of an acetyl moiety from 3-hydroxy-5-phosphonooxypentane-2,4-dione to CoA to form glycerone phosphate and acetyl-CoA. This is 3-hydroxy-5-phosphonooxypentane-2,4-dione thiolase (lsrF) from Shigella flexneri.